The chain runs to 887 residues: Alanine--tRNA ligase (887 aa).

The Zn(2+) site is built by histidine 564, histidine 568, cysteine 676, and histidine 680. Positions 854–873 (GQGGGGRPDMAQSGGPKGNK) are disordered.

This sequence belongs to the class-II aminoacyl-tRNA synthetase family. It depends on Zn(2+) as a cofactor.

It localises to the cytoplasm. The enzyme catalyses tRNA(Ala) + L-alanine + ATP = L-alanyl-tRNA(Ala) + AMP + diphosphate. In terms of biological role, catalyzes the attachment of alanine to tRNA(Ala) in a two-step reaction: alanine is first activated by ATP to form Ala-AMP and then transferred to the acceptor end of tRNA(Ala). Also edits incorrectly charged Ser-tRNA(Ala) and Gly-tRNA(Ala) via its editing domain. This chain is Alanine--tRNA ligase, found in Bartonella henselae (strain ATCC 49882 / DSM 28221 / CCUG 30454 / Houston 1) (Rochalimaea henselae).